A 931-amino-acid chain; its full sequence is Beta-mannosidase A (931 aa).

The N-terminal stretch at 1-21 (MRHSIGLAAALLAPTLPVALG) is a signal peptide. 7 N-linked (GlcNAc...) asparagine glycosylation sites follow: asparagine 40, asparagine 79, asparagine 247, asparagine 282, asparagine 316, asparagine 326, and asparagine 347. The Proton donor role is filled by glutamate 479. 8 N-linked (GlcNAc...) asparagine glycosylation sites follow: asparagine 550, asparagine 608, asparagine 658, asparagine 738, asparagine 790, asparagine 798, asparagine 830, and asparagine 918.

The protein belongs to the glycosyl hydrolase 2 family. Beta-mannosidase A subfamily. In terms of assembly, homodimer.

Its subcellular location is the secreted. It catalyses the reaction Hydrolysis of terminal, non-reducing beta-D-mannose residues in beta-D-mannosides.. It functions in the pathway glycan metabolism; N-glycan degradation. Functionally, exoglycosidase that cleaves the single beta-linked mannose residue from the non-reducing end of beta-mannosidic oligosaccharides of various complexity and length. Involved in the degradation of polymeric mannan and galactomannan. The sequence is that of Beta-mannosidase A (mndA) from Aspergillus niger (strain ATCC MYA-4892 / CBS 513.88 / FGSC A1513).